The chain runs to 837 residues: Outer membrane usher protein HifC (837 aa).

Residues 1-26 (MKTKNFPLNKIAFACTLLLANPVAWA) form the signal peptide. C813 and C833 are joined by a disulfide.

The protein belongs to the fimbrial export usher family.

It is found in the cell outer membrane. Functionally, essential for piliation. In Haemophilus influenzae, this protein is Outer membrane usher protein HifC (hifC).